A 309-amino-acid chain; its full sequence is Mitochondrial import receptor subunit TOM34 (309 aa).

A Phosphoserine modification is found at Ser8. TPR repeat units follow at residues 9–42 (VEELRAAGNESFRNGQYAEASALYGRALRVLQAQ), 51–84 (SVLYSNRAACHLKDGNCRDCIKDCTSALALVPFS), and 86–118 (KPLLRRASAYEALEKYPMAYVDYKTVLQIDDNV). Residue Ser160 is modified to Phosphoserine. The tract at residues 161-189 (LPSENHKEMAKSKSKETTATKNRVPSAGD) is disordered. A compositionally biased stretch (basic and acidic residues) spans 164–178 (ENHKEMAKSKSKETT). A Phosphoserine modification is found at Ser186. 3 TPR repeats span residues 193–226 (ARVLKEEGNELVKKGNHKKAIEKYSESLLCSNLE), 227–260 (SATYSNRALCYLVLKQYTEAVKDCTEALKLDGKN), and 262–294 (KAFYRRAQAHKALKDYKSSFADISNLLQIEPRN). Lys197 participates in a covalent cross-link: Glycyl lysine isopeptide (Lys-Gly) (interchain with G-Cter in SUMO2).

The protein belongs to the Tom34 family. In terms of assembly, interacts with HSP90A, VCP, ATP6V1D, KIAA0665, AMPK, and DMAP1 through its TPR repeat. Ubiquitous.

It is found in the cytoplasm. It localises to the mitochondrion outer membrane. Functionally, plays a role in the import of cytosolically synthesized preproteins into mitochondria. Binds the mature portion of precursor proteins. Interacts with cellular components, and possesses weak ATPase activity. May be a chaperone-like protein that helps to keep newly synthesized precursors in an unfolded import compatible state. The protein is Mitochondrial import receptor subunit TOM34 (TOMM34) of Homo sapiens (Human).